We begin with the raw amino-acid sequence, 113 residues long: U11-theraphotoxin-Hhn1t (113 aa).

The first 21 residues, 1–21 (MNTVRVTFLLVFVLAVSLGQA), serve as a signal peptide directing secretion. Positions 22-74 (DKDENRMEMQEKTEQGKSYLDFAENLLLQKLEELEAKLLEEDSEESRNSRQKR) are excised as a propeptide. Residues 60 to 69 (LEEDSEESRN) show a composition bias toward basic and acidic residues. The tract at residues 60 to 83 (LEEDSEESRNSRQKRCIGEGVPCD) is disordered. Disulfide bonds link Cys-75–Cys-90, Cys-82–Cys-95, and Cys-89–Cys-110.

This sequence belongs to the neurotoxin 14 (magi-1) family. 01 (HNTX-16) subfamily. Expressed by the venom gland.

The protein resides in the secreted. Functionally, probable ion channel inhibitor. The chain is U11-theraphotoxin-Hhn1t from Cyriopagopus hainanus (Chinese bird spider).